Here is a 142-residue protein sequence, read N- to C-terminus: Large ribosomal subunit protein uL16 (142 aa).

It belongs to the universal ribosomal protein uL16 family. Part of the 50S ribosomal subunit.

Functionally, binds 23S rRNA and is also seen to make contacts with the A and possibly P site tRNAs. This Thermotoga neapolitana (strain ATCC 49049 / DSM 4359 / NBRC 107923 / NS-E) protein is Large ribosomal subunit protein uL16.